Here is a 692-residue protein sequence, read N- to C-terminus: Acyl-coenzyme A oxidase 2, peroxisomal (692 aa).

Residues 1–49 constitute a peroxisome transit peptide; that stretch reads MESRREKNPMTEEESDGLIAARRIQRLSLHLSPSLTPSPSLPLVQTETC. 7 residues coordinate FAD: T186, S192, G225, R365, Q384, G452, and T473. Catalysis depends on E475, which acts as the Proton acceptor. D477 provides a ligand contact to FAD.

Belongs to the acyl-CoA oxidase family. As to quaternary structure, homodimer. It depends on FAD as a cofactor. Expressed mainly in flowers and young seedlings. Lower expression in roots, leaves and bracts.

It is found in the peroxisome. The catalysed reaction is a 2,3-saturated acyl-CoA + O2 = a (2E)-enoyl-CoA + H2O2. Functionally, catalyzes the desaturation of long-chain acyl-CoAs to 2-trans-enoyl-CoAs. Active on substrates longer than C14 and mostly with C18-CoA. Activity on long-chain mono-unsaturated substrates is double than with the corresponding saturated substrates. The chain is Acyl-coenzyme A oxidase 2, peroxisomal from Arabidopsis thaliana (Mouse-ear cress).